The primary structure comprises 187 residues: Threonylcarbamoyl-AMP synthase (187 aa).

The region spanning 4-187 (TLDLDRAVAA…DARSGQILRD (184 aa)) is the YrdC-like domain.

The protein belongs to the SUA5 family. TsaC subfamily.

It is found in the cytoplasm. The enzyme catalyses L-threonine + hydrogencarbonate + ATP = L-threonylcarbamoyladenylate + diphosphate + H2O. Required for the formation of a threonylcarbamoyl group on adenosine at position 37 (t(6)A37) in tRNAs that read codons beginning with adenine. Catalyzes the conversion of L-threonine, HCO(3)(-)/CO(2) and ATP to give threonylcarbamoyl-AMP (TC-AMP) as the acyladenylate intermediate, with the release of diphosphate. The polypeptide is Threonylcarbamoyl-AMP synthase (Xanthomonas axonopodis pv. citri (strain 306)).